We begin with the raw amino-acid sequence, 285 residues long: Bark agglutinin I polypeptide A (285 aa).

The N-terminal stretch at 1 to 31 (MTSYNFKTQTSFPLLLSISFFFLLLLNKVNS) is a signal peptide. N-linked (GlcNAc...) asparagine glycosylation occurs at Asn147. 2 residues coordinate Mn(2+): Glu156 and Asp158. Residues Asp158, Phe160, Asn162, and Asp166 each coordinate Ca(2+). Mn(2+) contacts are provided by Asp166 and His171. Asn188 carries an N-linked (GlcNAc...) asparagine glycan.

It belongs to the leguminous lectin family. In terms of assembly, RPbAI is composed of two polypeptides, A and B, that associate into five different tetrameric isolectins. The A4 combination is the only one devoid of agglutination activity. Isoform B4 displays maximal agglutination activity. In terms of tissue distribution, strong expression in seed. Lower levels in the flower, and the bark of the roots. No expression in leaf. The lectin accumulates in the inner bark in autumn.

Functionally, N-acetyl-D-galactosamine specific lectin. Bark lectins are storage protein that probably maintains stocks of nitrogen during dormant period. Self-aggregatable molecules that can bind their own carbohydrate side chains. They could also play a role in the plant's defense against phytophagous invertebrates or herbivorous higher animals. The protein is Bark agglutinin I polypeptide A of Robinia pseudoacacia (Black locust).